Reading from the N-terminus, the 72-residue chain is Phycobilisome 37.5 kDa linker polypeptide, phycocyanin-associated, rod (72 aa).

One can recognise a PBS-linker domain in the interval 1-72 (MTSSAAAIRL…ASGNISVREF (72 aa)).

It belongs to the phycobilisome linker protein family.

The protein localises to the cellular thylakoid membrane. In terms of biological role, rod linker protein, associated with phycocyanin. Linker polypeptides determine the state of aggregation and the location of the disk-shaped phycobiliprotein units within the phycobilisome and modulate their spectroscopic properties in order to mediate a directed and optimal energy transfer. This Pseudanabaena tenuis (strain PCC 7409) protein is Phycobilisome 37.5 kDa linker polypeptide, phycocyanin-associated, rod (cpcH2).